The sequence spans 276 residues: F420-dependent methylenetetrahydromethanopterin dehydrogenase (276 aa).

The segment at 253 to 276 (TVLRTPHGKEGKTLSKKDLLAKPE) is disordered. Residues 259–276 (HGKEGKTLSKKDLLAKPE) show a composition bias toward basic and acidic residues.

It belongs to the MTD family. Found to be tightly associated with methyl-coenzyme M methylreductase.

It carries out the reaction 5,10-methylenetetrahydromethanopterin + oxidized coenzyme F420-(gamma-L-Glu)(n) + 2 H(+) = 5,10-methenyl-5,6,7,8-tetrahydromethanopterin + reduced coenzyme F420-(gamma-L-Glu)(n). It functions in the pathway one-carbon metabolism; methanogenesis from CO(2); 5,10-methylene-5,6,7,8-tetrahydromethanopterin from 5,10-methenyl-5,6,7,8-tetrahydromethanopterin (coenzyme F420 route): step 1/1. Its activity is regulated as follows. Activity requires salt; 100 mM sodium or potassium salts of chloride, phosphate or sulfate are equally effective. Not inactivated by O(2). Inhibited by hydrogen-producing 5,10-methenyltetrahydromethanopterin hydrogenase which has a higher affinity for their shared substrate. Enzyme is O(2)-stable and strictly dependent on coenzyme F420. In terms of biological role, catalyzes the reversible reduction of methenyl-H(4)MPT(+) to methylene-H(4)MPT. This Methanothermobacter marburgensis (strain ATCC BAA-927 / DSM 2133 / JCM 14651 / NBRC 100331 / OCM 82 / Marburg) (Methanobacterium thermoautotrophicum) protein is F420-dependent methylenetetrahydromethanopterin dehydrogenase.